Here is a 173-residue protein sequence, read N- to C-terminus: 3-hydroxydecanoyl-[acyl-carrier-protein] dehydratase (173 aa).

H71 is a catalytic residue.

The protein belongs to the thioester dehydratase family. FabA subfamily. As to quaternary structure, homodimer.

The protein localises to the cytoplasm. It carries out the reaction a (3R)-hydroxyacyl-[ACP] = a (2E)-enoyl-[ACP] + H2O. The catalysed reaction is (3R)-hydroxydecanoyl-[ACP] = (2E)-decenoyl-[ACP] + H2O. The enzyme catalyses (2E)-decenoyl-[ACP] = (3Z)-decenoyl-[ACP]. It functions in the pathway lipid metabolism; fatty acid biosynthesis. Necessary for the introduction of cis unsaturation into fatty acids. Catalyzes the dehydration of (3R)-3-hydroxydecanoyl-ACP to E-(2)-decenoyl-ACP and then its isomerization to Z-(3)-decenoyl-ACP. Can catalyze the dehydratase reaction for beta-hydroxyacyl-ACPs with saturated chain lengths up to 16:0, being most active on intermediate chain length. This Baumannia cicadellinicola subsp. Homalodisca coagulata protein is 3-hydroxydecanoyl-[acyl-carrier-protein] dehydratase.